The chain runs to 396 residues: Acetate kinase (396 aa).

Asn8 provides a ligand contact to Mg(2+). Lys15 contacts ATP. Arg89 lines the substrate pocket. The Proton donor/acceptor role is filled by Asp146. ATP is bound by residues 206–210, 283–285, and 331–335; these read HIGNG, DMR, and GVGEN. Glu383 serves as a coordination point for Mg(2+).

It belongs to the acetokinase family. Homodimer. It depends on Mg(2+) as a cofactor. Mn(2+) serves as cofactor.

The protein resides in the cytoplasm. The catalysed reaction is acetate + ATP = acetyl phosphate + ADP. It functions in the pathway metabolic intermediate biosynthesis; acetyl-CoA biosynthesis; acetyl-CoA from acetate: step 1/2. Its function is as follows. Catalyzes the formation of acetyl phosphate from acetate and ATP. Can also catalyze the reverse reaction. The protein is Acetate kinase of Streptococcus pneumoniae (strain ATCC 700669 / Spain 23F-1).